The sequence spans 166 residues: Myosin regulatory light chain 2, ventricular/cardiac muscle isoform (166 aa).

Position 2 is a n,N,N-trimethylalanine (Ala-2). Residue Asn-14 is modified to Deamidated asparagine. Ser-15 is modified (phosphoserine; by ZIPK/DAPK3). Ser-19 bears the Phosphoserine mark. 3 consecutive EF-hand domains span residues 24–59 (TQIQEFKEAFTIMDQNRDGFIDKNDLRDTFAALGRV), 94–129 (DPEETILNAFKVFDPEGKGVLKADYVREMLTTQAER), and 130–165 (FSKEEVDQMFAAFPPDVTGNLDYKNLVHIITHGEEK). Ca(2+) contacts are provided by Asp-37, Asn-39, Asp-41, and Asp-48. Thr-52 carries the post-translational modification Phosphothreonine.

As to quaternary structure, myosin is a hexamer of 2 heavy chains and 4 light chains. Interacts with MYOC. N-terminus is methylated by METTL11A/NTM1. Post-translationally, phosphorylated by MYLK3 and MYLK2; promotes cardiac muscle contraction and function. Dephosphorylated by PPP1CB complexed to PPP1R12B. The phosphorylated form in adult is expressed as gradients across the heart from endocardium (low phosphorylation) to epicardium (high phosphorylation); regulates cardiac torsion and workload distribution. Highly expressed in type I muscle fibers.

It localises to the cytoplasm. It is found in the myofibril. The protein localises to the sarcomere. Its subcellular location is the a band. Contractile protein that plays a role in heart development and function. Following phosphorylation, plays a role in cross-bridge cycling kinetics and cardiac muscle contraction by increasing myosin lever arm stiffness and promoting myosin head diffusion; as a consequence of the increase in maximum contraction force and calcium sensitivity of contraction force. These events altogether slow down myosin kinetics and prolong duty cycle resulting in accumulated myosins being cooperatively recruited to actin binding sites to sustain thin filament activation as a means to fine-tune myofilament calcium sensitivity to force. During cardiogenesis plays an early role in cardiac contractility by promoting cardiac myofibril assembly. The protein is Myosin regulatory light chain 2, ventricular/cardiac muscle isoform of Homo sapiens (Human).